The sequence spans 237 residues: 7-cyano-7-deazaguanine synthase (237 aa).

14-24 (FSGGQDSATCL) provides a ligand contact to ATP. The Zn(2+) site is built by Cys202, Cys217, Cys220, and Cys223.

Belongs to the QueC family. The cofactor is Zn(2+).

The enzyme catalyses 7-carboxy-7-deazaguanine + NH4(+) + ATP = 7-cyano-7-deazaguanine + ADP + phosphate + H2O + H(+). Its pathway is purine metabolism; 7-cyano-7-deazaguanine biosynthesis. Functionally, catalyzes the ATP-dependent conversion of 7-carboxy-7-deazaguanine (CDG) to 7-cyano-7-deazaguanine (preQ(0)). This chain is 7-cyano-7-deazaguanine synthase, found in Rhodopseudomonas palustris (strain TIE-1).